A 404-amino-acid polypeptide reads, in one-letter code: Glucose-1-phosphate adenylyltransferase (404 aa).

Alpha-D-glucose 1-phosphate contacts are provided by residues Tyr-99, Gly-164, 179–180, and Ser-197; that span reads EK.

The protein belongs to the bacterial/plant glucose-1-phosphate adenylyltransferase family.

It catalyses the reaction alpha-D-glucose 1-phosphate + ATP + H(+) = ADP-alpha-D-glucose + diphosphate. The protein operates within glycan biosynthesis; glycogen biosynthesis. Functionally, involved in the biosynthesis of ADP-glucose, a building block, required in the biosynthesis of maltose-1-phosphate (M1P) and in the elongation reactions to produce linear alpha-1,4-glucans. Catalyzes the reaction between ATP and alpha-D-glucose 1-phosphate (G1P) to produce pyrophosphate and ADP-Glc. The chain is Glucose-1-phosphate adenylyltransferase from Mycolicibacterium gilvum (strain PYR-GCK) (Mycobacterium gilvum (strain PYR-GCK)).